Reading from the N-terminus, the 185-residue chain is Elongation factor P (185 aa).

The protein belongs to the elongation factor P family.

It is found in the cytoplasm. Its pathway is protein biosynthesis; polypeptide chain elongation. In terms of biological role, involved in peptide bond synthesis. Stimulates efficient translation and peptide-bond synthesis on native or reconstituted 70S ribosomes in vitro. Probably functions indirectly by altering the affinity of the ribosome for aminoacyl-tRNA, thus increasing their reactivity as acceptors for peptidyl transferase. In Mesomycoplasma hyopneumoniae (strain 7448) (Mycoplasma hyopneumoniae), this protein is Elongation factor P.